Consider the following 131-residue polypeptide: Translation initiation factor 5A (131 aa).

Lys-36 carries the hypusine modification.

The protein belongs to the eIF-5A family.

The protein localises to the cytoplasm. Functionally, functions by promoting the formation of the first peptide bond. This Saccharolobus islandicus (strain Y.N.15.51 / Yellowstone #2) (Sulfolobus islandicus) protein is Translation initiation factor 5A (eIF5A).